Reading from the N-terminus, the 503-residue chain is Arabinose import ATP-binding protein AraG (503 aa).

2 consecutive ABC transporter domains span residues 5–240 and 253–497; these read LRFD…MVGR and LGDV…LPQG. 37–44 is a binding site for ATP; it reads GENGAGKS.

Belongs to the ABC transporter superfamily. Arabinose importer (TC 3.A.1.2.2) family. In terms of assembly, the complex is composed of two ATP-binding proteins (AraG), two transmembrane proteins (AraH) and a solute-binding protein (AraF).

It localises to the cell inner membrane. It catalyses the reaction L-arabinose(out) + ATP + H2O = L-arabinose(in) + ADP + phosphate + H(+). In terms of biological role, part of the ABC transporter complex AraFGH involved in arabinose import. Responsible for energy coupling to the transport system. The protein is Arabinose import ATP-binding protein AraG of Burkholderia pseudomallei (strain 1710b).